A 319-amino-acid chain; its full sequence is 4-diphosphocytidyl-2-C-methyl-D-erythritol kinase (319 aa).

Lysine 21 is a catalytic residue. 106–116 (PIGAGLAGGSS) lines the ATP pocket. The active site involves aspartate 148.

This sequence belongs to the GHMP kinase family. IspE subfamily.

It catalyses the reaction 4-CDP-2-C-methyl-D-erythritol + ATP = 4-CDP-2-C-methyl-D-erythritol 2-phosphate + ADP + H(+). Its pathway is isoprenoid biosynthesis; isopentenyl diphosphate biosynthesis via DXP pathway; isopentenyl diphosphate from 1-deoxy-D-xylulose 5-phosphate: step 3/6. Functionally, catalyzes the phosphorylation of the position 2 hydroxy group of 4-diphosphocytidyl-2C-methyl-D-erythritol. The polypeptide is 4-diphosphocytidyl-2-C-methyl-D-erythritol kinase (Prochlorococcus marinus (strain SARG / CCMP1375 / SS120)).